We begin with the raw amino-acid sequence, 950 residues long: Translation initiation factor IF-2 (950 aa).

4 stretches are compositionally biased toward basic and acidic residues: residues 128 to 158 (KPKV…EAKA), 165 to 186 (AEVK…EKKK), 200 to 234 (KRAE…DNRR), and 291 to 312 (NRRD…DGNR). The interval 128–354 (KPKVAEPVKK…NNQSSSVPAT (227 aa)) is disordered. 2 stretches are compositionally biased toward polar residues: residues 322 to 336 (NRNQ…NWNQ) and 343 to 353 (YQNNQSSSVPA). The 172-residue stretch at 448-619 (ERPAVVTIMG…LLVAEVQELK (172 aa)) folds into the tr-type G domain. A G1 region spans residues 457-464 (GHVDHGKT). 457-464 (GHVDHGKT) serves as a coordination point for GTP. Residues 482 to 486 (GITQH) form a G2 region. A G3 region spans residues 503–506 (DTPG). Residues 503–507 (DTPGH) and 557–560 (NKID) contribute to the GTP site. The tract at residues 557-560 (NKID) is G4. Positions 595-597 (SAK) are G5.

Belongs to the TRAFAC class translation factor GTPase superfamily. Classic translation factor GTPase family. IF-2 subfamily.

Its subcellular location is the cytoplasm. In terms of biological role, one of the essential components for the initiation of protein synthesis. Protects formylmethionyl-tRNA from spontaneous hydrolysis and promotes its binding to the 30S ribosomal subunits. Also involved in the hydrolysis of GTP during the formation of the 70S ribosomal complex. The polypeptide is Translation initiation factor IF-2 (Lactococcus lactis subsp. cremoris (strain MG1363)).